We begin with the raw amino-acid sequence, 911 residues long: Alpha-actinin-4 (911 aa).

The segment at 1 to 269 (MVDYHAANQS…YVSSFYHAFS (269 aa)) is actin-binding. A disordered region spans residues 8 to 31 (NQSYQYGPSSGSNGAGGGGTMGDY). Positions 12-26 (QYGPSSGSNGAGGGG) are interaction with VCL. The residue at position 31 (tyrosine 31) is a Phosphotyrosine. The segment at 40 to 61 (RDLLLDPAWEKQQRKTFTAWCN) is interaction with VCL. Calponin-homology (CH) domains are found at residues 50 to 154 (KQQR…LRFA) and 163 to 269 (TSAK…HAFS). Positions 84–88 (LMLLL) match the LXXLL motif motif. The segment at 108–126 (KINNVNKALDFIASKGVKL) is interaction with VCL. The residue at position 114 (lysine 114) is an N6-acetyllysine. The interval 177–192 (TAPYKNVNVQNFHISW) is polyphosphoinositide (PIP2)-binding. At lysine 214 the chain carries N6-acetyllysine. Threonine 249 carries the phosphothreonine modification. Spectrin repeat units follow at residues 293-403 (HLME…WLLN), 413-518 (HLAE…ALEK), 528-639 (QLHL…ALLE), and 649-752 (HLRR…EVEN). N6-acetyllysine occurs at positions 592 and 625. Phosphoserine is present on serine 696. A mediates interaction with MICALL2 region spans residues 736 to 911 (WEQLLTTIAR…STALYGESDL (176 aa)). 2 consecutive EF-hand domains span residues 765–800 (EQMQEFRASFNHFDKDHGGALGPEEFKACLISLGYD) and 806–841 (QGDAEFNRIMSVVDPNHSGLVTFQAFIDFMSRETTD). Aspartate 778 provides a ligand contact to Ca(2+). At lysine 779 the chain carries N6-acetyllysine. Ca(2+) is bound by residues aspartate 780 and glutamate 789. At lysine 859 the chain carries N6-acetyllysine. Position 909 is a phosphoserine (serine 909).

It belongs to the alpha-actinin family. As to quaternary structure, homodimer; antiparallel. Identified in a IGF2BP1-dependent mRNP granule complex containing untranslated mRNAs. Component of the CART complex, at least composed of ACTN4, HGS/HRS, MYO5B and TRIM3. Binds TRIM3 at the N-terminus. Interacts with MAGI1. Interacts with PDLIM2. Identified in a complex with CASK, IQGAP1, MAGI2, NPHS1, SPTAN1 and SPTBN1. Interacts with MICALL2 (preferentially in opened conformation); stimulated by RAB13 activation. Interacts with PPARG and RARA. Binds to VCL; this interaction triggers VCL conformational changes. Interacts with SEPTIN14. Interacts with IGSF8.

The protein localises to the nucleus. It is found in the cytoplasm. The protein resides in the cell junction. Its subcellular location is the cytoskeleton. It localises to the stress fiber. The protein localises to the perinuclear region. Functionally, F-actin cross-linking protein which is thought to anchor actin to a variety of intracellular structures. This is a bundling protein. Probably involved in vesicular trafficking via its association with the CART complex. The CART complex is necessary for efficient transferrin receptor recycling but not for EGFR degradation. Involved in tight junction assembly in epithelial cells probably through interaction with MICALL2. Links MICALL2 to the actin cytoskeleton and recruits it to the tight junctions. May also function as a transcriptional coactivator, stimulating transcription mediated by the nuclear hormone receptors PPARG and RARA. Association with IGSF8 regulates the immune synapse formation and is required for efficient T-cell activation. The polypeptide is Alpha-actinin-4 (Bos taurus (Bovine)).